A 94-amino-acid chain; its full sequence is Large ribosomal subunit protein bL25 (94 aa).

The protein belongs to the bacterial ribosomal protein bL25 family. As to quaternary structure, part of the 50S ribosomal subunit; part of the 5S rRNA/L5/L18/L25 subcomplex. Contacts the 5S rRNA. Binds to the 5S rRNA independently of L5 and L18.

Its function is as follows. This is one of the proteins that binds to the 5S RNA in the ribosome where it forms part of the central protuberance. This Serratia proteamaculans (strain 568) protein is Large ribosomal subunit protein bL25.